A 72-amino-acid chain; its full sequence is Large ribosomal subunit protein uL29 (72 aa).

Belongs to the universal ribosomal protein uL29 family.

This Prochlorococcus marinus (strain MIT 9312) protein is Large ribosomal subunit protein uL29.